A 112-amino-acid chain; its full sequence is Citrate synthase (112 aa).

Residues His-39 and Asp-97 contribute to the active site.

The protein belongs to the citrate synthase family.

It carries out the reaction oxaloacetate + acetyl-CoA + H2O = citrate + CoA + H(+). The protein operates within carbohydrate metabolism; tricarboxylic acid cycle; isocitrate from oxaloacetate: step 1/2. The sequence is that of Citrate synthase (gltA) from Bartonella vinsonii subsp. berkhoffii.